Here is a 71-residue protein sequence, read N- to C-terminus: Small ribosomal subunit protein bS18 (71 aa).

Belongs to the bacterial ribosomal protein bS18 family. In terms of assembly, part of the 30S ribosomal subunit. Forms a tight heterodimer with protein bS6.

Binds as a heterodimer with protein bS6 to the central domain of the 16S rRNA, where it helps stabilize the platform of the 30S subunit. This is Small ribosomal subunit protein bS18 from Nostoc sp. (strain PCC 7120 / SAG 25.82 / UTEX 2576).